Here is a 110-residue protein sequence, read N- to C-terminus: Large ribosomal subunit protein uL22 (110 aa).

This sequence belongs to the universal ribosomal protein uL22 family. In terms of assembly, part of the 50S ribosomal subunit.

Its function is as follows. This protein binds specifically to 23S rRNA; its binding is stimulated by other ribosomal proteins, e.g. L4, L17, and L20. It is important during the early stages of 50S assembly. It makes multiple contacts with different domains of the 23S rRNA in the assembled 50S subunit and ribosome. The globular domain of the protein is located near the polypeptide exit tunnel on the outside of the subunit, while an extended beta-hairpin is found that lines the wall of the exit tunnel in the center of the 70S ribosome. This is Large ribosomal subunit protein uL22 from Nitrosococcus oceani (strain ATCC 19707 / BCRC 17464 / JCM 30415 / NCIMB 11848 / C-107).